Consider the following 218-residue polypeptide: MSDNDELQQIAHLRREYTKGGLRRRDLPADPLTLFERWLSQACEAKLADPTAMVVATVDEHDQPYQRIVLLKHYDEKGMVFYTNLGSRKAHQIENNPRVSLLFPWHTLERQVMVIGKAERLSTLEVMKYFHSRPRDSQIGAWVSKQSSRISARGILESKFLELKQKFQQGEVPLPSFWGGFRVSLEQIEFWQGGEHRLHDRFLYQRENDAWKIDRLAP.

Residues 14–17 (RREY) and lysine 72 each bind substrate. FMN is bound by residues 67-72 (RIVLLK), 82-83 (YT), arginine 88, lysine 89, and glutamine 111. Positions 129, 133, and 137 each coordinate substrate. FMN is bound by residues 146 to 147 (QS) and tryptophan 191. 197-199 (RLH) contributes to the substrate binding site. Position 201 (arginine 201) interacts with FMN.

The protein belongs to the pyridoxamine 5'-phosphate oxidase family. As to quaternary structure, homodimer. FMN is required as a cofactor.

It carries out the reaction pyridoxamine 5'-phosphate + O2 + H2O = pyridoxal 5'-phosphate + H2O2 + NH4(+). The enzyme catalyses pyridoxine 5'-phosphate + O2 = pyridoxal 5'-phosphate + H2O2. It participates in cofactor metabolism; pyridoxal 5'-phosphate salvage; pyridoxal 5'-phosphate from pyridoxamine 5'-phosphate: step 1/1. It functions in the pathway cofactor metabolism; pyridoxal 5'-phosphate salvage; pyridoxal 5'-phosphate from pyridoxine 5'-phosphate: step 1/1. In terms of biological role, catalyzes the oxidation of either pyridoxine 5'-phosphate (PNP) or pyridoxamine 5'-phosphate (PMP) into pyridoxal 5'-phosphate (PLP). In Escherichia coli O45:K1 (strain S88 / ExPEC), this protein is Pyridoxine/pyridoxamine 5'-phosphate oxidase.